Here is a 185-residue protein sequence, read N- to C-terminus: Probable RNA 2'-phosphotransferase (185 aa).

Belongs to the KptA/TPT1 family.

Functionally, removes the 2'-phosphate from RNA via an intermediate in which the phosphate is ADP-ribosylated by NAD followed by a presumed transesterification to release the RNA and generate ADP-ribose 1''-2''-cyclic phosphate (APPR&gt;P). May function as an ADP-ribosylase. The polypeptide is Probable RNA 2'-phosphotransferase (Rhizobium rhizogenes (strain K84 / ATCC BAA-868) (Agrobacterium radiobacter)).